The sequence spans 476 residues: Probable periplasmic serine endoprotease DegP-like (476 aa).

The signal sequence occupies residues 1–27 (MSIPRLKSYFTILATVLVLGQAVSAQA). Active-site charge relay system residues include His-116, Asp-146, and Ser-219. Residues 217–219 (GNS) and 274–278 (LGVVI) each bind substrate. PDZ domains follow at residues 263 to 354 (LKTG…IRDG) and 360 to 465 (ELTV…LRQG).

Belongs to the peptidase S1C family.

The protein localises to the periplasm. It catalyses the reaction Acts on substrates that are at least partially unfolded. The cleavage site P1 residue is normally between a pair of hydrophobic residues, such as Val-|-Val.. Functionally, might be efficient in the degradation of transiently denatured and unfolded proteins which accumulate in the periplasm following stress conditions. The polypeptide is Probable periplasmic serine endoprotease DegP-like (mucD) (Pseudomonas fluorescens (strain ATCC BAA-477 / NRRL B-23932 / Pf-5)).